Consider the following 539-residue polypeptide: Membrane protein insertase YidC (539 aa).

5 helical membrane passes run 6–26, 341–361, 416–436, 454–474, and 495–515; these read TLLV…WQVA, SVIQ…TFIV, LGGC…YWAL, LSAQ…MFLI, and PVMF…YWLV.

The protein belongs to the OXA1/ALB3/YidC family. Type 1 subfamily. Interacts with the Sec translocase complex via SecD. Specifically interacts with transmembrane segments of nascent integral membrane proteins during membrane integration.

The protein localises to the cell inner membrane. Required for the insertion and/or proper folding and/or complex formation of integral membrane proteins into the membrane. Involved in integration of membrane proteins that insert both dependently and independently of the Sec translocase complex, as well as at least some lipoproteins. Aids folding of multispanning membrane proteins. The polypeptide is Membrane protein insertase YidC (Vibrio vulnificus (strain CMCP6)).